Consider the following 221-residue polypeptide: CDP-diacylglycerol--glycerol-3-phosphate 3-phosphatidyltransferase (221 aa).

5 consecutive transmembrane segments (helical) span residues 8–28 (ILTVLRLLAAPGVAVMFLYFH), 34–54 (WFALTLFILAAVTDFFDGYLA), 75–95 (MVVIALVIITGYSGMNPWLIL), 133–153 (AQMVAIAILFLGTGLEHLEGI), and 187–207 (ATWLGLALIWIAAALTFITGW).

This sequence belongs to the CDP-alcohol phosphatidyltransferase class-I family.

It localises to the cell membrane. The enzyme catalyses a CDP-1,2-diacyl-sn-glycerol + sn-glycerol 3-phosphate = a 1,2-diacyl-sn-glycero-3-phospho-(1'-sn-glycero-3'-phosphate) + CMP + H(+). It functions in the pathway phospholipid metabolism; phosphatidylglycerol biosynthesis; phosphatidylglycerol from CDP-diacylglycerol: step 1/2. Its function is as follows. This protein catalyzes the committed step to the synthesis of the acidic phospholipids. This chain is CDP-diacylglycerol--glycerol-3-phosphate 3-phosphatidyltransferase (pgsA), found in Cereibacter sphaeroides (strain ATCC 17023 / DSM 158 / JCM 6121 / CCUG 31486 / LMG 2827 / NBRC 12203 / NCIMB 8253 / ATH 2.4.1.) (Rhodobacter sphaeroides).